Reading from the N-terminus, the 214-residue chain is Protein GrpE (214 aa).

The segment covering 1–13 has biased composition (polar residues); it reads MKHTSEPTSQPDT. Residues 1–61 form a disordered region; the sequence is MKHTSEPTSQ…AAVAEATIEP (61 aa). Residues 14 to 57 show a composition bias toward low complexity; the sequence is QAAESAQSSAAAAGQAASAYSSQAQRASADAQAIAGDEAAVAEA.

It belongs to the GrpE family. Homodimer.

It localises to the cytoplasm. Functionally, participates actively in the response to hyperosmotic and heat shock by preventing the aggregation of stress-denatured proteins, in association with DnaK and GrpE. It is the nucleotide exchange factor for DnaK and may function as a thermosensor. Unfolded proteins bind initially to DnaJ; upon interaction with the DnaJ-bound protein, DnaK hydrolyzes its bound ATP, resulting in the formation of a stable complex. GrpE releases ADP from DnaK; ATP binding to DnaK triggers the release of the substrate protein, thus completing the reaction cycle. Several rounds of ATP-dependent interactions between DnaJ, DnaK and GrpE are required for fully efficient folding. This is Protein GrpE from Ralstonia nicotianae (strain ATCC BAA-1114 / GMI1000) (Ralstonia solanacearum).